Consider the following 355-residue polypeptide: Probable dual-specificity RNA methyltransferase RlmN (355 aa).

The segment at 1-20 (MSATPVTQLTPSSQPQQPCS) is disordered. Glutamate 107 functions as the Proton acceptor in the catalytic mechanism. The Radical SAM core domain occupies 113-341 (TDKRLTVCVS…VSVRYSRGLE (229 aa)). Cysteine 120 and cysteine 346 are oxidised to a cystine. Residues cysteine 127, cysteine 131, and cysteine 134 each contribute to the [4Fe-4S] cluster site. S-adenosyl-L-methionine is bound by residues 174–175 (GE), serine 204, 227–229 (SLH), and asparagine 303. The S-methylcysteine intermediate role is filled by cysteine 346.

This sequence belongs to the radical SAM superfamily. RlmN family. [4Fe-4S] cluster is required as a cofactor.

It localises to the cytoplasm. The catalysed reaction is adenosine(2503) in 23S rRNA + 2 reduced [2Fe-2S]-[ferredoxin] + 2 S-adenosyl-L-methionine = 2-methyladenosine(2503) in 23S rRNA + 5'-deoxyadenosine + L-methionine + 2 oxidized [2Fe-2S]-[ferredoxin] + S-adenosyl-L-homocysteine. It catalyses the reaction adenosine(37) in tRNA + 2 reduced [2Fe-2S]-[ferredoxin] + 2 S-adenosyl-L-methionine = 2-methyladenosine(37) in tRNA + 5'-deoxyadenosine + L-methionine + 2 oxidized [2Fe-2S]-[ferredoxin] + S-adenosyl-L-homocysteine. In terms of biological role, specifically methylates position 2 of adenine 2503 in 23S rRNA and position 2 of adenine 37 in tRNAs. This chain is Probable dual-specificity RNA methyltransferase RlmN, found in Nostoc sp. (strain PCC 7120 / SAG 25.82 / UTEX 2576).